The primary structure comprises 269 residues: MLHIPPENVWIALAVTLAAGLATAIGSLLVLFSRRPNPRLLAFGLAFAGGAMVYVSLSEILNKSIASFALAYGERTGFTYGTLAFLLGVIVIVLIDHFIPNPHDSLDKQDPAFRENSREYLKRVALLTSIAITAHNFPEGLATFFATLESPSVGMPLAFAIAIHNIPEGIAIAVPVYFATQNKFYAFSASLLSGLAEPVGAALGYWLLSGSLSHATFGWVFGLIAGVMVFLALDELLPAAKRYAKGHETVYGLVAGMGTLAISLVLFKW.

Helical transmembrane passes span 11 to 31, 40 to 60, 80 to 100, 125 to 145, 158 to 178, 187 to 207, 217 to 237, and 249 to 269; these read IALA…LLVL, LLAF…LSEI, YGTL…HFIP, ALLT…ATFF, AFAI…PVYF, FSAS…GYWL, FGWV…DELL, and TVYG…LFKW. Positions 136 and 139 each coordinate Fe(2+). Residues glutamate 139 and histidine 164 each coordinate Zn(2+). The Fe(2+) site is built by asparagine 165, glutamate 168, and glutamate 197. Glutamate 168 lines the Zn(2+) pocket.

Belongs to the ZIP transporter (TC 2.A.5) family. ZupT subfamily.

The protein localises to the cell inner membrane. It catalyses the reaction Zn(2+)(in) = Zn(2+)(out). Mediates zinc uptake. May also transport other divalent cations. This chain is Zinc transporter ZupT, found in Stenotrophomonas maltophilia (strain R551-3).